The chain runs to 87 residues: RNA-binding protein Hfq (87 aa).

The Sm domain occupies 9 to 68; that stretch reads DPYLNVLRKERIPVSIYLVNGIKLQGQVESFDQFVVLLKNTVSQMVYKHAISTVVPSRPV.

This sequence belongs to the Hfq family. In terms of assembly, homohexamer.

Its function is as follows. RNA chaperone that binds small regulatory RNA (sRNAs) and mRNAs to facilitate mRNA translational regulation in response to envelope stress, environmental stress and changes in metabolite concentrations. Also binds with high specificity to tRNAs. The sequence is that of RNA-binding protein Hfq from Teredinibacter turnerae (strain ATCC 39867 / T7901).